The chain runs to 159 residues: Endoribonuclease YbeY (159 aa).

Zn(2+) is bound by residues H125, H129, and H135.

It belongs to the endoribonuclease YbeY family. It depends on Zn(2+) as a cofactor.

The protein localises to the cytoplasm. In terms of biological role, single strand-specific metallo-endoribonuclease involved in late-stage 70S ribosome quality control and in maturation of the 3' terminus of the 16S rRNA. This Limosilactobacillus reuteri (strain DSM 20016) (Lactobacillus reuteri) protein is Endoribonuclease YbeY.